A 109-amino-acid polypeptide reads, in one-letter code: Protein ripply2 (109 aa).

Positions 1-15 are enriched in polar residues; the sequence is MENITFTSGLNSEMD. Disordered regions lie at residues 1–42 and 88–109; these read MENI…RPAD and YEDP…KELR. The WRPW motif signature appears at 20–23; that stretch reads WRPW. The segment covering 30–42 has biased composition (basic and acidic residues); it reads KAPDYKPYKRPAD. The interval 53-88 is ripply homology domain; that stretch reads HPVKLFWPKSQCFDYLYEDAEVLLRNYPVQATICLY. Acidic residues predominate over residues 89-109; the sequence is EDPDTEDEEDYSDEEDEKELR.

The protein belongs to the ripply family. In terms of tissue distribution, first expressed in the paraxial mesoderm at the 90% epiboly stage, and subsequently confined to the presomitic mesoderm. Expressed in the rostral compartment of S-I and S-II.

It localises to the nucleus. Its function is as follows. Plays a role in somitogenesis. Required for somite segregation and establishment of rostrocaudal polarity in somites. The polypeptide is Protein ripply2 (Danio rerio (Zebrafish)).